The following is a 211-amino-acid chain: Beta-crystallin B3 (211 aa).

Met-1 bears the N-acetylmethionine mark. At Ala-2 the chain carries N-acetylalanine; in Beta-crystallin B3, N-terminally processed. The tract at residues 2–23 (AEQHGAPEQAAAGKSHGGLGGS) is N-terminal arm. Beta/gamma crystallin 'Greek key' domains are found at residues 24–63 (YKVT…QVES) and 64–108 (GPWL…RPLH). The connecting peptide stretch occupies residues 109 to 113 (IDGPD). Beta/gamma crystallin 'Greek key' domains follow at residues 114-155 (HKLH…RVIN) and 156-198 (GTWV…RRIR). The interval 200 to 211 (QKWHKRGCFLSS) is C-terminal arm.

This sequence belongs to the beta/gamma-crystallin family. Homo/heterodimer, or complexes of higher-order. The structure of beta-crystallin oligomers seems to be stabilized through interactions between the N-terminal arms.

Its function is as follows. Crystallins are the dominant structural components of the vertebrate eye lens. The sequence is that of Beta-crystallin B3 (Crybb3) from Mus musculus (Mouse).